The primary structure comprises 206 residues: Small ribosomal subunit protein uS4 (206 aa).

Residues 96-156 (GRLDNVVYRM…EKSKKQARIK (61 aa)) form the S4 RNA-binding domain.

Belongs to the universal ribosomal protein uS4 family. As to quaternary structure, part of the 30S ribosomal subunit. Contacts protein S5. The interaction surface between S4 and S5 is involved in control of translational fidelity.

In terms of biological role, one of the primary rRNA binding proteins, it binds directly to 16S rRNA where it nucleates assembly of the body of the 30S subunit. Its function is as follows. With S5 and S12 plays an important role in translational accuracy. This chain is Small ribosomal subunit protein uS4, found in Mannheimia succiniciproducens (strain KCTC 0769BP / MBEL55E).